The chain runs to 382 residues: Lipid-A-disaccharide synthase (382 aa).

The protein belongs to the LpxB family.

It catalyses the reaction 2-N,3-O-bis[(3R)-3-hydroxytetradecanoyl]-alpha-D-glucosaminyl 1-phosphate + UDP-2-N,3-O-bis[(3R)-3-hydroxytetradecanoyl]-alpha-D-glucosamine = lipid A disaccharide (E. coli) + UDP + H(+). The catalysed reaction is a lipid X + a UDP-2-N,3-O-bis[(3R)-3-hydroxyacyl]-alpha-D-glucosamine = a lipid A disaccharide + UDP + H(+). The protein operates within glycolipid biosynthesis; lipid IV(A) biosynthesis; lipid IV(A) from (3R)-3-hydroxytetradecanoyl-[acyl-carrier-protein] and UDP-N-acetyl-alpha-D-glucosamine: step 5/6. Its function is as follows. Condensation of UDP-2,3-diacylglucosamine and 2,3-diacylglucosamine-1-phosphate to form lipid A disaccharide, a precursor of lipid A, a phosphorylated glycolipid that anchors the lipopolysaccharide to the outer membrane of the cell. This Salmonella paratyphi A (strain AKU_12601) protein is Lipid-A-disaccharide synthase.